We begin with the raw amino-acid sequence, 305 residues long: Mycothiol acetyltransferase (305 aa).

2 N-acetyltransferase domains span residues 10-154 (DRLD…VVLE) and 156-305 (ISLR…YARA). Residue glutamate 38 coordinates 1D-myo-inositol 2-(L-cysteinylamino)-2-deoxy-alpha-D-glucopyranoside. Acetyl-CoA is bound at residue 82 to 84 (LAV). 3 residues coordinate 1D-myo-inositol 2-(L-cysteinylamino)-2-deoxy-alpha-D-glucopyranoside: glutamate 183, lysine 225, and glutamate 238. Acetyl-CoA is bound by residues 242–244 (VAI) and 249–255 (QGRGLGR). Tyrosine 276 is a binding site for 1D-myo-inositol 2-(L-cysteinylamino)-2-deoxy-alpha-D-glucopyranoside. 281 to 286 (NASALH) provides a ligand contact to acetyl-CoA.

Belongs to the acetyltransferase family. MshD subfamily. In terms of assembly, monomer.

The catalysed reaction is 1D-myo-inositol 2-(L-cysteinylamino)-2-deoxy-alpha-D-glucopyranoside + acetyl-CoA = mycothiol + CoA + H(+). Functionally, catalyzes the transfer of acetyl from acetyl-CoA to desacetylmycothiol (Cys-GlcN-Ins) to form mycothiol. The polypeptide is Mycothiol acetyltransferase (Rhodococcus opacus (strain B4)).